Reading from the N-terminus, the 2282-residue chain is MKGHQFKSWIFELREILREIKNSHYFLDSWTQFNSVGSFIHIFFHQERFIKLLDPRIWSILLSRNSQGSTSNRYFTIKCVVLFVVAILIYRINNRNMVERKNLYLTGLLPIPMNSIGPRTDTLEESFGSSNINRLIVSLLYLPKGKKISESFFLDPKESTWVLPITKRCIMPESNWGSRWWRNWLGKKRDSSCKISNETVAGIEISFKEKDLKYLEFLFVYYMDDPIRKDHDWELFDRLSPSKRRNIINLNSGHLFEILVKDWICYLMFAFREKIPIEVGGFLKQQGAGSTIQSNDIERFSHLFLRNKWAISLQNCAQFHMWQFRQDLFVSWGKNPHESDFLRNIARENWIWLDNVWLVNKDRFFTKVRNVSSNIQYDSTRSSFVQVTDSSQLKGSSDQSRDHFDSISNEDSEYHTLINQREIQQLKERSILWDPSFLQAERREIESDRFPKCLSGYSSMSRLFTERERQMNKHLLPEEIEEFLGNPARSIRSFFSDRWSELHLGSNPTERSTRDQKLLKKEEDVSFVPSRRSENKEIVNIFKIITYLQNTVSIHPISSDPGCDMVPKDELDMDSSNKISFLNKNPFFDLFHLFHDRNRGGSTLHHDFESEERFQEMADLFTLSITEPDLVYHKGFAFSIFSYGLEQKQFLNEVFNSRNESKKKSLLVLPPIFYEENESFYRRIRKKWVRISCGNDLEDPKPKIVVFASNNIMEAVNQSRLIRNRIQIQYSTYGYIRNVLNRFFLMNRSDRNFEYGIHRDQIGNDTLNHRTIMKYTINQHLSNLKKSQKKWFAPLILISRTERFMNRDPNAYRYKWSNGSKNFQEHLKHFVSEQKSRFQVVFDRLRINQYSIDWSEVIDKKDLSKPLPFFLSKFLFFLSNSLPFFFVSFGNIPIHRSEIHIYELKGPNDQLCNQLLESIGLQIVHLKKLKPFLLDDHNTSQKSKFLINGGRISPFLFNKIPKWMIDSFHTRKNRRKSFDNTDSYFSMISHDQDNWLNPVKPFHRSSLISSFYKANRLRFLNNPHRFRFYCNKRFTFYVEKVRINNYDFTYGQFLNILFIRNKIFSLCGGKKKHAFLERDTISPIESQVSNIFIPNDFPQSGDERYNLYKFFPFPIRSDLLVRRAIYSIAAISGTPLTEGQIVNFERTYCQPLSDMNRSDSDEKNLHQYLNFNSNMGLIHTPCSEKYLPSEKRKRKKRSLCLKKCVEKGQMSRTFQRDSAFSTLSKWNRFQTYMPWFLTSTGYKYLNLIFLDTFSDLLPVLSSSQKFVSIFHDIMHGSDRAWRILQKKWCLPQWNLISEISSKCFHNLLLSEEMIHRNNESPLISTHLRSPNAREFLYSILFLLLVAGYLVHTHLLFVSRAYSELETEFERVKSLMIPPYMIELRKLLDRYPTSELNSFWLKNLFLVALEQLGDSLEEIRGSAFGGNMLWGGGPADGVKSIRSKTKDLNINLVDITDLISIIPNPINRITFSRNTRHLSHTSKEIYSLIRKRKKGNGDWIDDKIESWVANSDSIDDKEREFLVQFSTLTLTTEKRIDQILSSLTHSDHLSKNDSGYQMIEQPGTIYLRYLVDIHKKHFMNYEFNTYCLAERRIFLAHYQTITYSQTSCGANSFHFPSHGKPFSLRLALSPSRGILVIGSIGTGRSYLVKYLAANSYVPFITVFLNKFLDNKPKGFLIDDIDDASDDIDASDDIDRDLDTELELLTMMNALTIDMMSEIGRFYITLQFELAKAMSPCIIWIPNIHDLDVNESNYLSLGLLVNYLSRDCERCSTRNILVIASTHIPQKVDPALIAPNKLNTCIKIRRLLIPQQRKHFFTLSYTRGFHLEKKMFHTNGFGSITMGSNARDLVALTNEALSISITQKKSIIDTNTIRSALHRQTWDLRSQVRSVQDHGILFYQIGRAVAQNVLLSNCPIDPISIYMKKKSCNEGDSYLYKWYFELGTSMKKLTILLYLLSCSAGSVAQDLWSLPGPDEKNGITSSGLVENDSDLVHGLLEVEGALVGSSRTEKDCSRFDNDRVTLLLRPEPRNPLDMMQKGSCSIVDQRFLYEKYESEFEEGEGEGVLDPQQIEEDLFNHIVWAPRIWRPWGFLFDCIERPNELGFPYRAGSFRGKRIIYDEKDELQENDSEFLQSRTMQYQTRDRSSNEQGFFRISQFIWEPADPLFFLFKDQPLVSVFSHREFFADEEMSKGLLTSQPDPPTSIYKRWFIKNTQEKHFELLIHRQRWLRTNSSLSNGFFRSNTPSESYQYLSNLFLSNGTLLDQMTKTLLRKRWLFPDEMKIGFM.

An ATP-binding site is contributed by 1637 to 1644 (GSIGTGRS).

Belongs to the Ycf2 family.

It is found in the plastid. It localises to the chloroplast stroma. Its function is as follows. Probable ATPase of unknown function. Its presence in a non-photosynthetic plant (Epifagus virginiana) and experiments in tobacco indicate that it has an essential function which is probably not related to photosynthesis. This is Protein Ycf2 from Citrus sinensis (Sweet orange).